A 274-amino-acid chain; its full sequence is Triosephosphate isomerase (274 aa).

31 to 33 serves as a coordination point for substrate; sequence NWK. H118 functions as the Electrophile in the catalytic mechanism. E188 (proton acceptor) is an active-site residue. Residues G194, S234, and 255–256 each bind substrate; that span reads GG.

The protein belongs to the triosephosphate isomerase family. As to quaternary structure, homodimer.

It localises to the cytoplasm. The enzyme catalyses D-glyceraldehyde 3-phosphate = dihydroxyacetone phosphate. It participates in carbohydrate biosynthesis; gluconeogenesis. It functions in the pathway carbohydrate degradation; glycolysis; D-glyceraldehyde 3-phosphate from glycerone phosphate: step 1/1. In terms of biological role, involved in the gluconeogenesis. Catalyzes stereospecifically the conversion of dihydroxyacetone phosphate (DHAP) to D-glyceraldehyde-3-phosphate (G3P). The chain is Triosephosphate isomerase from Chlamydia trachomatis serovar A (strain ATCC VR-571B / DSM 19440 / HAR-13).